The primary structure comprises 528 residues: Tyrosine--tRNA ligase, cytoplasmic (528 aa).

Residue Y39 coordinates L-tyrosine. Residues 44–52 carry the 'HIGH' region motif; the sequence is TTGKPHVAY. L-tyrosine is bound by residues Y166, Q170, D173, and Q188. Residues 222-226 carry the 'KMSKS' region motif; that stretch reads KMSSS. Residues 242 to 247 carry the Nuclear localization signal motif; it reads KKKLKK. Residues 332–362 form a disordered region; that stretch reads EMKKLSNDAYPDASKQKSVPKGSTKNSGTEE. The 105-residue stretch at 364–468 folds into the tRNA-binding domain; the sequence is DPSLLDLRVG…SGSAPGERIY (105 aa).

Belongs to the class-I aminoacyl-tRNA synthetase family. As to quaternary structure, homodimer.

It is found in the cytoplasm. Its subcellular location is the nucleus. The catalysed reaction is tRNA(Tyr) + L-tyrosine + ATP = L-tyrosyl-tRNA(Tyr) + AMP + diphosphate + H(+). Functionally, catalyzes the attachment of tyrosine to tRNA(Tyr) in a two-step reaction: tyrosine is first activated by ATP to form Tyr-AMP and then transferred to the acceptor end of tRNA(Tyr). The chain is Tyrosine--tRNA ligase, cytoplasmic (yars1) from Xenopus laevis (African clawed frog).